Here is a 570-residue protein sequence, read N- to C-terminus: 2-succinyl-5-enolpyruvyl-6-hydroxy-3-cyclohexene-1-carboxylate synthase (570 aa).

This sequence belongs to the TPP enzyme family. MenD subfamily. As to quaternary structure, homodimer. Mg(2+) is required as a cofactor. It depends on Mn(2+) as a cofactor. The cofactor is thiamine diphosphate.

The catalysed reaction is isochorismate + 2-oxoglutarate + H(+) = 5-enolpyruvoyl-6-hydroxy-2-succinyl-cyclohex-3-ene-1-carboxylate + CO2. Its pathway is quinol/quinone metabolism; 1,4-dihydroxy-2-naphthoate biosynthesis; 1,4-dihydroxy-2-naphthoate from chorismate: step 2/7. The protein operates within quinol/quinone metabolism; menaquinone biosynthesis. Catalyzes the thiamine diphosphate-dependent decarboxylation of 2-oxoglutarate and the subsequent addition of the resulting succinic semialdehyde-thiamine pyrophosphate anion to isochorismate to yield 2-succinyl-5-enolpyruvyl-6-hydroxy-3-cyclohexene-1-carboxylate (SEPHCHC). The protein is 2-succinyl-5-enolpyruvyl-6-hydroxy-3-cyclohexene-1-carboxylate synthase of Vibrio cholerae serotype O1 (strain ATCC 39541 / Classical Ogawa 395 / O395).